The primary structure comprises 118 residues: Large ribosomal subunit protein bL19 (118 aa).

This sequence belongs to the bacterial ribosomal protein bL19 family.

In terms of biological role, this protein is located at the 30S-50S ribosomal subunit interface and may play a role in the structure and function of the aminoacyl-tRNA binding site. The sequence is that of Large ribosomal subunit protein bL19 from Levilactobacillus brevis (strain ATCC 367 / BCRC 12310 / CIP 105137 / JCM 1170 / LMG 11437 / NCIMB 947 / NCTC 947) (Lactobacillus brevis).